Here is a 177-residue protein sequence, read N- to C-terminus: Biotin-dependent acetyl-/propionyl-coenzyme A carboxylase epsilon subunit (177 aa).

The segment at 1 to 112 is disordered; it reads MGTCPCESSE…TEKPLHPHEP (112 aa). Positions 18-100 are enriched in polar residues; the sequence is VSGTNEVSDG…SDGNETNNPA (83 aa).

Interacts with the AccA3/AccD5 biotin-dependent acyl-CoA carboxylase complex. Interacts with the AccA3/AccD6 complex. Is also part of the long-chain acyl-CoA carboxylase (LCC) complex, which is composed of AccA3, AccD4, AccD5 and AccE5. The four subunits are essential for activity, but AccD5, together with AccE5, probably plays a structural role rather than a catalytic one.

In terms of biological role, stimulates activity of the AccA3/AccD5 biotin-dependent acyl-CoA carboxylase complex. Interacts with AccD5 and modulates its carboxylase activity for acetyl-CoA and propionyl-CoA. Inhibits activity of the AccA3/AccD6 complex. Is also required for the activity of the long-chain acyl-CoA carboxylase (LCC) complex. This is Biotin-dependent acetyl-/propionyl-coenzyme A carboxylase epsilon subunit from Mycobacterium tuberculosis (strain ATCC 25618 / H37Rv).